We begin with the raw amino-acid sequence, 146 residues long: Prolactin-inducible protein homolog (146 aa).

Residues 1-28 form the signal peptide; it reads MRLLQFLFRASPATLLLVLCLHLGANKA. Residue Gln-29 is modified to Pyrrolidone carboxylic acid. Cystine bridges form between Cys-65–Cys-91 and Cys-89–Cys-123. Asn-105 carries an N-linked (GlcNAc...) asparagine glycan.

It belongs to the PIP family. As to quaternary structure, monomer. Interacts with AZGP1.

The protein localises to the secreted. The protein is Prolactin-inducible protein homolog (PIP) of Macaca fuscata fuscata (Japanese macaque).